Reading from the N-terminus, the 218-residue chain is Glutathione S-transferase class-mu 26 kDa isozyme 7 (218 aa).

One can recognise a GST N-terminal domain in the interval 2–83 (PAKLGYWKIR…YIADKHGMLG (82 aa)). Glutathione is bound by residues 7–8 (YW), 41–45 (WLGDK), 54–55 (NL), and 67–68 (QS). Residues 85 to 203 (TPEERARISM…KSERFIKWPL (119 aa)) enclose the GST C-terminal domain. Tyr111 is a substrate binding site.

It belongs to the GST superfamily. Mu family. In terms of assembly, homodimer.

It catalyses the reaction RX + glutathione = an S-substituted glutathione + a halide anion + H(+). Conjugation of reduced glutathione to a wide number of exogenous and endogenous hydrophobic electrophiles. In terms of biological role, GST isoenzymes appear to play a central role in the parasite detoxification system. Other functions are also suspected including a role in increasing the solubility of haematin in the parasite gut. This chain is Glutathione S-transferase class-mu 26 kDa isozyme 7, found in Fasciola hepatica (Liver fluke).